Here is a 440-residue protein sequence, read N- to C-terminus: GTPase Der (440 aa).

2 consecutive EngA-type G domains span residues 4-169 (PVVA…PEED) and 178-353 (IKVA…DQAA). Residues 10–17 (GRPNVGKS), 57–61 (DTGGI), 120–123 (NKVD), 184–191 (GKPNVGKS), 231–235 (DTAGI), and 296–299 (NKWD) contribute to the GTP site. The KH-like domain maps to 354 to 438 (MRISTGVLND…PIKFILREKE (85 aa)).

Belongs to the TRAFAC class TrmE-Era-EngA-EngB-Septin-like GTPase superfamily. EngA (Der) GTPase family. Associates with the 50S ribosomal subunit.

In terms of biological role, GTPase that plays an essential role in the late steps of ribosome biogenesis. The sequence is that of GTPase Der from Acetivibrio thermocellus (strain ATCC 27405 / DSM 1237 / JCM 9322 / NBRC 103400 / NCIMB 10682 / NRRL B-4536 / VPI 7372) (Clostridium thermocellum).